The primary structure comprises 182 residues: Crossover junction endodeoxyribonuclease RuvC (182 aa).

Active-site residues include Asp-7, Glu-69, and Asp-141. Mg(2+)-binding residues include Asp-7, Glu-69, and Asp-141.

It belongs to the RuvC family. Homodimer which binds Holliday junction (HJ) DNA. The HJ becomes 2-fold symmetrical on binding to RuvC with unstacked arms; it has a different conformation from HJ DNA in complex with RuvA. In the full resolvosome a probable DNA-RuvA(4)-RuvB(12)-RuvC(2) complex forms which resolves the HJ. It depends on Mg(2+) as a cofactor.

Its subcellular location is the cytoplasm. The catalysed reaction is Endonucleolytic cleavage at a junction such as a reciprocal single-stranded crossover between two homologous DNA duplexes (Holliday junction).. Functionally, the RuvA-RuvB-RuvC complex processes Holliday junction (HJ) DNA during genetic recombination and DNA repair. Endonuclease that resolves HJ intermediates. Cleaves cruciform DNA by making single-stranded nicks across the HJ at symmetrical positions within the homologous arms, yielding a 5'-phosphate and a 3'-hydroxyl group; requires a central core of homology in the junction. The consensus cleavage sequence is 5'-(A/T)TT(C/G)-3'. Cleavage occurs on the 3'-side of the TT dinucleotide at the point of strand exchange. HJ branch migration catalyzed by RuvA-RuvB allows RuvC to scan DNA until it finds its consensus sequence, where it cleaves and resolves the cruciform DNA. The chain is Crossover junction endodeoxyribonuclease RuvC from Polaromonas naphthalenivorans (strain CJ2).